The primary structure comprises 88 residues: Phosphocarrier protein HPr (88 aa).

Residues 1-88 form the HPr domain; it reads MASKEFHIVV…ETMTKEGLAE (88 aa). H15 serves as the catalytic Pros-phosphohistidine intermediate. S46 carries the phosphoserine; by HPrK/P modification.

It belongs to the HPr family.

It localises to the cytoplasm. Its activity is regulated as follows. Phosphorylation on Ser-46 inhibits the phosphoryl transfer from enzyme I to HPr. General (non sugar-specific) component of the phosphoenolpyruvate-dependent sugar phosphotransferase system (sugar PTS). This major carbohydrate active-transport system catalyzes the phosphorylation of incoming sugar substrates concomitantly with their translocation across the cell membrane. The phosphoryl group from phosphoenolpyruvate (PEP) is transferred to the phosphoryl carrier protein HPr by enzyme I. Phospho-HPr then transfers it to the PTS EIIA domain. Its function is as follows. P-Ser-HPr interacts with the catabolite control protein A (CcpA), forming a complex that binds to DNA at the catabolite response elements cre, operator sites preceding a large number of catabolite-regulated genes. Thus, P-Ser-HPr is a corepressor in carbon catabolite repression (CCR), a mechanism that allows bacteria to coordinate and optimize the utilization of available carbon sources. P-Ser-HPr also plays a role in inducer exclusion, in which it probably interacts with several non-PTS permeases and inhibits their transport activity. This Lactococcus lactis subsp. lactis (strain IL1403) (Streptococcus lactis) protein is Phosphocarrier protein HPr (ptsH).